The following is a 263-amino-acid chain: Phosphatidylglycerol--prolipoprotein diacylglyceryl transferase (263 aa).

Transmembrane regions (helical) follow at residues 15–35, 52–72, 83–103, and 112–132; these read ISIH…VYLA, FILL…VIFQ, IFAI…GAAV, and AIAV…AQSI. R134 lines the a 1,2-diacyl-sn-glycero-3-phospho-(1'-sn-glycerol) pocket. The next 3 helical transmembrane spans lie at 170 to 190, 200 to 220, and 230 to 250; these read VPTF…ILGL, GDVT…IEGM, and LRVS…LLYF.

It belongs to the Lgt family.

It localises to the cell membrane. It catalyses the reaction L-cysteinyl-[prolipoprotein] + a 1,2-diacyl-sn-glycero-3-phospho-(1'-sn-glycerol) = an S-1,2-diacyl-sn-glyceryl-L-cysteinyl-[prolipoprotein] + sn-glycerol 1-phosphate + H(+). The protein operates within protein modification; lipoprotein biosynthesis (diacylglyceryl transfer). Catalyzes the transfer of the diacylglyceryl group from phosphatidylglycerol to the sulfhydryl group of the N-terminal cysteine of a prolipoprotein, the first step in the formation of mature lipoproteins. This Streptococcus thermophilus (strain ATCC BAA-250 / LMG 18311) protein is Phosphatidylglycerol--prolipoprotein diacylglyceryl transferase.